Here is a 380-residue protein sequence, read N- to C-terminus: Chromo domain-containing protein 2 (380 aa).

2 disordered regions span residues 14–58 and 100–156; these read ISES…SLYG and KLSP…VPLN. Residues 33-52 are compositionally biased toward polar residues; that stretch reads NSINNKSSTASLESPQNGSW. The segment covering 108–119 has biased composition (acidic residues); sequence EDSEDKKEEDES. Residues 121-140 are compositionally biased toward low complexity; the sequence is SYKNEFKSSSSASVSSNFEK. The 63-residue stretch at 176–238 folds into the Chromo domain; the sequence is FAVEMILDSR…SRGGKPDLSS (63 aa). Residues 250–273 are disordered; the sequence is SNEASYVEKDESSNSDDSISYKRR.

It is found in the nucleus. Component of the kinetochore which plays a role in stabilizing microtubules and so allowing accurate chromosome segregation. The protein is Chromo domain-containing protein 2 (chp2) of Schizosaccharomyces pombe (strain 972 / ATCC 24843) (Fission yeast).